The sequence spans 138 residues: Cell division protein SepF (138 aa).

This sequence belongs to the SepF family. As to quaternary structure, homodimer. Interacts with FtsZ.

The protein resides in the cytoplasm. Functionally, cell division protein that is part of the divisome complex and is recruited early to the Z-ring. Probably stimulates Z-ring formation, perhaps through the cross-linking of FtsZ protofilaments. Its function overlaps with FtsA. The sequence is that of Cell division protein SepF from Limosilactobacillus reuteri (strain DSM 20016) (Lactobacillus reuteri).